Consider the following 383-residue polypeptide: MRHVLNKEQLLMVKQAAIAWAAAEPLSVENVEVAPPKAHEVRIKILHTGVCHTDAYTLSGKDPEGAFPVILGHEGAGIVESVGEGVTNVKVGDYVIALYTPECGECKFCRSGKTNLCGKIRATQGRGVMPDGTTRFKARGKDLLHFMGCSTFSEYTVVADISVVAVTPSCPTDRSCLLGCGITTGYGAATVTANITEGSNVAVFGAGCVGLSIVQGAVKKKAGKIIVVDINDGKEAWAYKFGATHFLNPARLRKTVQDELIDMTDGGCDYTFDCTGNVSVMRAALEACHKGWGESIVIGVAAAGQEITTRPFQLVTGRVWRGCAFGGVKGRSQLPGLVEDYLNGDLKIDEFITHRETLANINTAFEQMKQGDCIRCVVDMVVS.

C51 provides a ligand contact to Zn(2+). H52 lines the NAD(+) pocket. Residues H73, E74, C103, C106, C109, C117, and C180 each contribute to the Zn(2+) site. Residues 205–210, D229, and 298–300 contribute to the NAD(+) site; these read GAGCVG and IGV.

Belongs to the zinc-containing alcohol dehydrogenase family. Class-III subfamily. Zn(2+) is required as a cofactor.

It carries out the reaction a primary alcohol + NAD(+) = an aldehyde + NADH + H(+). The catalysed reaction is a secondary alcohol + NAD(+) = a ketone + NADH + H(+). The enzyme catalyses S-(hydroxymethyl)glutathione + NADP(+) = S-formylglutathione + NADPH + H(+). It catalyses the reaction S-(hydroxymethyl)glutathione + NAD(+) = S-formylglutathione + NADH + H(+). It carries out the reaction S-nitrosoglutathione + NADH + H(+) = S-(hydroxysulfenamide)glutathione + NAD(+). Its function is as follows. Oxidizes long-chain alcohols and, in the presence of glutathione, is able to oxidize formaldehyde. Also acts as a S-nitroso-glutathione reductase by catalyzing the NADH-dependent reduction of S-nitrosoglutathione, thereby regulating protein S-nitrosylation. The protein is S-(hydroxymethyl)glutathione dehydrogenase (FDH1) of Aspergillus oryzae (strain ATCC 42149 / RIB 40) (Yellow koji mold).